Consider the following 191-residue polypeptide: Large ribosomal subunit protein uL5 (191 aa).

The protein belongs to the universal ribosomal protein uL5 family. In terms of assembly, part of the 50S ribosomal subunit; part of the 5S rRNA/L5/L18/L25 subcomplex. Contacts the 5S rRNA and the P site tRNA. Forms a bridge to the 30S subunit in the 70S ribosome.

Its function is as follows. This is one of the proteins that bind and probably mediate the attachment of the 5S RNA into the large ribosomal subunit, where it forms part of the central protuberance. In the 70S ribosome it contacts protein S13 of the 30S subunit (bridge B1b), connecting the 2 subunits; this bridge is implicated in subunit movement. Contacts the P site tRNA; the 5S rRNA and some of its associated proteins might help stabilize positioning of ribosome-bound tRNAs. The protein is Large ribosomal subunit protein uL5 of Corynebacterium glutamicum (strain R).